Reading from the N-terminus, the 68-residue chain is MKAGMKLVLVLVIASIALLALATEVAGDCIPQGASCNRLSTIPRRCCFPMVCGWDSSTCVPATINVKP.

Positions 1–22 (MKAGMKLVLVLVIASIALLALA) are cleaved as a signal peptide. 3 disulfides stabilise this stretch: Cys-29–Cys-47, Cys-36–Cys-52, and Cys-46–Cys-59.

Belongs to the venom Ptu1-like knottin family. In terms of tissue distribution, expressed by the venom gland.

Its subcellular location is the secreted. Binds reversibly and blocks P/Q-type voltage-gated calcium channels (Cav). The sequence is that of U-reduvitoxin-Pr3a from Platymeris rhadamanthus (Red spot assassin bug).